A 190-amino-acid chain; its full sequence is Transcription antitermination protein NusB (190 aa).

The disordered stretch occupies residues 158–190 (AGTSEDHVPQREPAAGQLGQDDSNGGQVAAVCR).

The protein belongs to the NusB family.

Involved in transcription antitermination. Required for transcription of ribosomal RNA (rRNA) genes. Binds specifically to the boxA antiterminator sequence of the ribosomal RNA (rrn) operons. The sequence is that of Transcription antitermination protein NusB from Mycobacterium leprae (strain TN).